Reading from the N-terminus, the 72-residue chain is Aurein-2.3 (72 aa).

Residues 1–22 (MAFLKKSLFLVLFLGLVSLSIC) form the signal peptide. Residues 23–49 (EKEKRQNGEDEDENEAANHEEGSEEKR) constitute a propeptide that is removed on maturation. The tract at residues 27–47 (RQNGEDEDENEAANHEEGSEE) is disordered. Residues 38–47 (AANHEEGSEE) are compositionally biased toward basic and acidic residues. Leu65 carries the leucine amide modification. Residues 69–72 (NDVE) constitute a propeptide that is removed on maturation.

Amidation is essential for antibacterial activity against Gram-positive bacteria. Expressed by the skin dorsal glands.

The protein resides in the secreted. The protein localises to the target cell membrane. Its function is as follows. Amphipathic alpha-helical antimicrobial peptide with weak to moderate activity against Gram-positive bacteria, and no activity against Gram-negative bacteria. Probably acts by disturbing membrane functions with its amphipathic structure. Strongly inhibits the formation of NO by neuronal nitric oxide synthase (nNOS) at micromolar concentrations. Acts by a non-competitive mechanism, probably by binding to calcium/calmodulin and as a consequence blocking calmodulin attachment to nNOS. In Ranoidea aurea (Green and golden bell frog), this protein is Aurein-2.3.